The sequence spans 303 residues: Methionyl-tRNA formyltransferase (303 aa).

108 to 111 (SDLP) is a binding site for (6S)-5,6,7,8-tetrahydrofolate.

This sequence belongs to the Fmt family.

The catalysed reaction is L-methionyl-tRNA(fMet) + (6R)-10-formyltetrahydrofolate = N-formyl-L-methionyl-tRNA(fMet) + (6S)-5,6,7,8-tetrahydrofolate + H(+). Its function is as follows. Attaches a formyl group to the free amino group of methionyl-tRNA(fMet). The formyl group appears to play a dual role in the initiator identity of N-formylmethionyl-tRNA by promoting its recognition by IF2 and preventing the misappropriation of this tRNA by the elongation apparatus. The sequence is that of Methionyl-tRNA formyltransferase from Rickettsia canadensis (strain McKiel).